Consider the following 256-residue polypeptide: Thiazole synthase (256 aa).

Catalysis depends on Lys-95, which acts as the Schiff-base intermediate with DXP. Residues Gly-156, 182 to 183, and 204 to 205 each bind 1-deoxy-D-xylulose 5-phosphate; these read AG and NT.

It belongs to the ThiG family. In terms of assembly, homotetramer. Forms heterodimers with either ThiH or ThiS.

It localises to the cytoplasm. The catalysed reaction is [ThiS sulfur-carrier protein]-C-terminal-Gly-aminoethanethioate + 2-iminoacetate + 1-deoxy-D-xylulose 5-phosphate = [ThiS sulfur-carrier protein]-C-terminal Gly-Gly + 2-[(2R,5Z)-2-carboxy-4-methylthiazol-5(2H)-ylidene]ethyl phosphate + 2 H2O + H(+). The protein operates within cofactor biosynthesis; thiamine diphosphate biosynthesis. Functionally, catalyzes the rearrangement of 1-deoxy-D-xylulose 5-phosphate (DXP) to produce the thiazole phosphate moiety of thiamine. Sulfur is provided by the thiocarboxylate moiety of the carrier protein ThiS. In vitro, sulfur can be provided by H(2)S. The protein is Thiazole synthase of Shigella flexneri.